The chain runs to 246 residues: Ribonuclease PH (246 aa).

Residues 1–33 (MTPPKLPVREGRDALTPRPVSVQRGVNPHAPGS) form a disordered region. Residues Arg90 and 128 to 130 (GTR) each bind phosphate.

It belongs to the RNase PH family. As to quaternary structure, homohexameric ring arranged as a trimer of dimers.

The enzyme catalyses tRNA(n+1) + phosphate = tRNA(n) + a ribonucleoside 5'-diphosphate. Phosphorolytic 3'-5' exoribonuclease that plays an important role in tRNA 3'-end maturation. Removes nucleotide residues following the 3'-CCA terminus of tRNAs; can also add nucleotides to the ends of RNA molecules by using nucleoside diphosphates as substrates, but this may not be physiologically important. Probably plays a role in initiation of 16S rRNA degradation (leading to ribosome degradation) during starvation. This is Ribonuclease PH from Deinococcus radiodurans (strain ATCC 13939 / DSM 20539 / JCM 16871 / CCUG 27074 / LMG 4051 / NBRC 15346 / NCIMB 9279 / VKM B-1422 / R1).